The chain runs to 261 residues: Ribosomal RNA small subunit methyltransferase J (261 aa).

S-adenosyl-L-methionine contacts are provided by residues 111–112 (RD), 127–128 (ER), 163–164 (SS), and aspartate 181.

The protein belongs to the methyltransferase superfamily. RsmJ family.

It is found in the cytoplasm. It carries out the reaction guanosine(1516) in 16S rRNA + S-adenosyl-L-methionine = N(2)-methylguanosine(1516) in 16S rRNA + S-adenosyl-L-homocysteine + H(+). In terms of biological role, specifically methylates the guanosine in position 1516 of 16S rRNA. This chain is Ribosomal RNA small subunit methyltransferase J, found in Shewanella sp. (strain MR-7).